The following is a 195-amino-acid chain: Ribonuclease HII (195 aa).

The RNase H type-2 domain occupies 6 to 195 (SLIAGVDEVG…KSFISRLEIN (190 aa)). A divalent metal cation is bound by residues Asp-12, Glu-13, and Asp-108.

It belongs to the RNase HII family. Mn(2+) is required as a cofactor. Requires Mg(2+) as cofactor.

The protein localises to the cytoplasm. It catalyses the reaction Endonucleolytic cleavage to 5'-phosphomonoester.. Functionally, endonuclease that specifically degrades the RNA of RNA-DNA hybrids. This is Ribonuclease HII from Prochlorococcus marinus (strain NATL1A).